Here is a 420-residue protein sequence, read N- to C-terminus: UDP-N-acetylglucosamine 1-carboxyvinyltransferase (420 aa).

Phosphoenolpyruvate is bound at residue 22-23; that stretch reads KN. Arg93 contributes to the UDP-N-acetyl-alpha-D-glucosamine binding site. Residue Cys117 is the Proton donor of the active site. 2-(S-cysteinyl)pyruvic acid O-phosphothioketal is present on Cys117. UDP-N-acetyl-alpha-D-glucosamine-binding residues include Asp307 and Ile329.

This sequence belongs to the EPSP synthase family. MurA subfamily.

The protein localises to the cytoplasm. The enzyme catalyses phosphoenolpyruvate + UDP-N-acetyl-alpha-D-glucosamine = UDP-N-acetyl-3-O-(1-carboxyvinyl)-alpha-D-glucosamine + phosphate. It participates in cell wall biogenesis; peptidoglycan biosynthesis. Its function is as follows. Cell wall formation. Adds enolpyruvyl to UDP-N-acetylglucosamine. This chain is UDP-N-acetylglucosamine 1-carboxyvinyltransferase, found in Shewanella pealeana (strain ATCC 700345 / ANG-SQ1).